Consider the following 236-residue polypeptide: 5'-methylthioadenosine/S-adenosylhomocysteine nucleosidase (236 aa).

Glu12 functions as the Proton acceptor in the catalytic mechanism. Substrate contacts are provided by residues Gly78, Ile153, and 174–175 (ME). The Proton donor role is filled by Asp198.

Belongs to the PNP/UDP phosphorylase family. MtnN subfamily.

It catalyses the reaction S-adenosyl-L-homocysteine + H2O = S-(5-deoxy-D-ribos-5-yl)-L-homocysteine + adenine. The catalysed reaction is S-methyl-5'-thioadenosine + H2O = 5-(methylsulfanyl)-D-ribose + adenine. The enzyme catalyses 5'-deoxyadenosine + H2O = 5-deoxy-D-ribose + adenine. Its pathway is amino-acid biosynthesis; L-methionine biosynthesis via salvage pathway; S-methyl-5-thio-alpha-D-ribose 1-phosphate from S-methyl-5'-thioadenosine (hydrolase route): step 1/2. Catalyzes the irreversible cleavage of the glycosidic bond in both 5'-methylthioadenosine (MTA) and S-adenosylhomocysteine (SAH/AdoHcy) to adenine and the corresponding thioribose, 5'-methylthioribose and S-ribosylhomocysteine, respectively. Also cleaves 5'-deoxyadenosine, a toxic by-product of radical S-adenosylmethionine (SAM) enzymes, into 5-deoxyribose and adenine. This Shewanella baltica (strain OS155 / ATCC BAA-1091) protein is 5'-methylthioadenosine/S-adenosylhomocysteine nucleosidase.